Consider the following 222-residue polypeptide: uncharacterized protein (222 aa).

The next 2 membrane-spanning stretches (helical) occupy residues 22 to 42 (IRVILFIMAICMAMVLLFLYI) and 189 to 209 (AICLALGFFLSIVISVMFCLV).

It is found in the cell membrane. This is an uncharacterized protein from Escherichia coli (strain K12).